A 1057-amino-acid polypeptide reads, in one-letter code: Carbamoyl phosphate synthase large chain (1057 aa).

Positions Met1–Asp401 are carboxyphosphate synthetic domain. 12 residues coordinate ATP: Arg129, Arg169, Gly175, Gly176, Gln208, Ile210, Glu215, Gly241, Ile242, His243, Gln284, and Glu298. One can recognise an ATP-grasp 1 domain in the interval Arg133–Val327. Residues Gln284, Glu298, and Asn300 each coordinate Mg(2+). Residues Gln284, Glu298, and Asn300 each coordinate Mn(2+). Residues Ile402–Ser546 are oligomerization domain. The carbamoyl phosphate synthetic domain stretch occupies residues Ile547–Lys929. One can recognise an ATP-grasp 2 domain in the interval Asn671–Leu861. Arg707, Gln746, Leu748, Glu752, Gly777, Val778, His779, Ser780, Gln820, and Glu832 together coordinate ATP. Mg(2+)-binding residues include Gln820, Glu832, and Asn834. Mn(2+)-binding residues include Gln820, Glu832, and Asn834. The MGS-like domain maps to Met930–Leu1057. The interval Met930 to Leu1057 is allosteric domain.

The protein belongs to the CarB family. As to quaternary structure, composed of two chains; the small (or glutamine) chain promotes the hydrolysis of glutamine to ammonia, which is used by the large (or ammonia) chain to synthesize carbamoyl phosphate. Tetramer of heterodimers (alpha,beta)4. The cofactor is Mg(2+). It depends on Mn(2+) as a cofactor.

The catalysed reaction is hydrogencarbonate + L-glutamine + 2 ATP + H2O = carbamoyl phosphate + L-glutamate + 2 ADP + phosphate + 2 H(+). It catalyses the reaction hydrogencarbonate + NH4(+) + 2 ATP = carbamoyl phosphate + 2 ADP + phosphate + 2 H(+). Its pathway is amino-acid biosynthesis; L-arginine biosynthesis; carbamoyl phosphate from bicarbonate: step 1/1. It functions in the pathway pyrimidine metabolism; UMP biosynthesis via de novo pathway; (S)-dihydroorotate from bicarbonate: step 1/3. Functionally, large subunit of the glutamine-dependent carbamoyl phosphate synthetase (CPSase). CPSase catalyzes the formation of carbamoyl phosphate from the ammonia moiety of glutamine, carbonate, and phosphate donated by ATP, constituting the first step of 2 biosynthetic pathways, one leading to arginine and/or urea and the other to pyrimidine nucleotides. The large subunit (synthetase) binds the substrates ammonia (free or transferred from glutamine from the small subunit), hydrogencarbonate and ATP and carries out an ATP-coupled ligase reaction, activating hydrogencarbonate by forming carboxy phosphate which reacts with ammonia to form carbamoyl phosphate. The protein is Carbamoyl phosphate synthase large chain of Pediococcus pentosaceus (strain ATCC 25745 / CCUG 21536 / LMG 10740 / 183-1w).